The primary structure comprises 370 residues: Phosphoserine aminotransferase (370 aa).

At M1 the chain carries N-acetylmethionine. 2 residues coordinate O-phospho-L-serine: H44 and R45. At K51 the chain carries N6-acetyllysine. 3 residues coordinate pyridoxal 5'-phosphate: G79, C80, and W107. At K127 the chain carries N6-acetyllysine. Residues T156, D176, and Q199 each coordinate pyridoxal 5'-phosphate. K200 bears the N6-(pyridoxal phosphate)lysine mark. Pyridoxal 5'-phosphate-binding residues include N241 and T242. K269, K318, and K323 each carry N6-acetyllysine. S331 carries the post-translational modification Phosphoserine. N6-acetyllysine is present on K333. O-phospho-L-serine is bound by residues H335, R336, and R342.

It belongs to the class-V pyridoxal-phosphate-dependent aminotransferase family. SerC subfamily. As to quaternary structure, homodimer. The cofactor is pyridoxal 5'-phosphate. In terms of tissue distribution, expressed at high levels in the brain, liver, kidney and pancreas, and very weakly expressed in the thymus, prostate, testis and colon.

It catalyses the reaction O-phospho-L-serine + 2-oxoglutarate = 3-phosphooxypyruvate + L-glutamate. The protein operates within amino-acid biosynthesis; L-serine biosynthesis; L-serine from 3-phospho-D-glycerate: step 2/3. Phosphoserine transaminase activity is strongly stimulated by increasing the ionic strength. In terms of biological role, involved in L-serine biosynthesis via the phosphorylated pathway, a three-step pathway converting the glycolytic intermediate 3-phospho-D-glycerate into L-serine. Catalyzes the second step, that is the pyridoxal 5'-phosphate-dependent transamination of 3-phosphohydroxypyruvate and L-glutamate to O-phosphoserine (OPS) and alpha-ketoglutarate. The sequence is that of Phosphoserine aminotransferase from Homo sapiens (Human).